We begin with the raw amino-acid sequence, 389 residues long: Chalcone synthase 1 (389 aa).

Cys-164 is an active-site residue.

The protein belongs to the thiolase-like superfamily. Chalcone/stilbene synthases family.

The catalysed reaction is (E)-4-coumaroyl-CoA + 3 malonyl-CoA + 3 H(+) = 2',4,4',6'-tetrahydroxychalcone + 3 CO2 + 4 CoA. It participates in secondary metabolite biosynthesis; flavonoid biosynthesis. Its function is as follows. The primary product of this enzyme is 4,2',4',6'-tetrahydroxychalcone (also termed naringenin-chalcone or chalcone) which can under specific conditions spontaneously isomerize into naringenin. The chain is Chalcone synthase 1 (CHS1) from Cicer arietinum (Chickpea).